We begin with the raw amino-acid sequence, 184 residues long: Non-fimbrial adhesin 1 (184 aa).

An N-terminal signal peptide occupies residues 1-28 (MKAKKYENQIYNENGRRCQRHGRRLAIA). A disulfide bond links Cys-57 and Cys-91.

Forms a polymeric structure, which disintegrates with elevated temperature into a monomer but with some relatively stable dimers.

This Escherichia coli protein is Non-fimbrial adhesin 1 (nfaA).